The chain runs to 118 residues: Large ribosomal subunit protein eL18 (118 aa).

Belongs to the eukaryotic ribosomal protein eL18 family.

This Nanoarchaeum equitans (strain Kin4-M) protein is Large ribosomal subunit protein eL18.